Here is a 1186-residue protein sequence, read N- to C-terminus: MTNETIDQTRTPDQTQSQTAFDPQQFINNLQVAFIKVDNVVASFDPDQKPIVDKNDRDNRQAFDGISQLREEYSNKAIKNPTKKNQYFSDFIDKSNDLINKDNLIDVESSTKSFQKFGDQRYQIFTSWVSHQKDPSKINTRSIRNFMENIIQPPIPDDKEKAEFLKSAKQSFAGIIIGNQIRTDQKFMGVFDESLKERQEAEKNGGPTGGDWLDIFLSFIFNKKQSSDVKEAINQEPVPHVQPDIATTTTDIQGLPPEARDLLDERGNFSKFTLGDMEMLDVEGVADIDPNYKFNQLLIHNNALSSVLMGSHNGIEPEKVSLLYAGNGGFGDKHDWNATVGYKDQQGNNVATLINVHMKNGSGLVIAGGEKGINNPSFYLYKEDQLTGSQRALSQEEIRNKVDFMEFLAQNNTKLDNLSEKEKEKFQNEIEDFQKDSKAYLDALGNDRIAFVSKKDTKHSALITEFNNGDLSYTLKDYGKKADKALDREKNVTLQGSLKHDGVMFVDYSNFKYTNASKNPNKGVGATNGVSHLEAGFNKVAVFNLPDLNNLAITSFVRRNLENKLTAKGLSLQEANKLIKDFLSSNKELAGKALNFNKAVAEAKSTGNYDEVKKAQKDLEKSLRKREHLEKEVEKKLESKSGNKNKMEAKAQANSQKDEIFALINKEANRDARAIAYTQNLKGIKRELSDKLEKISKDLKDFSKSFDEFKNGKNKDFSKAEETLKALKGSVKDLGINPEWISKVENLNAALNEFKNGKNKDFSKVTQAKSDLENSVKDVIINQKVTDKVDNLNQAVSVAKAMGDFSRVEQVLADLKNFSKEQLAQQAQKNEDFNTGKNSELYQSVKNSVNKTLVGNGLSGIEATALAKNFSDIKKELNEKFKNFNNNNNGLKNSTEPIYAKVNKKKTGQVASPEEPIYTQVAKKVNAKIDRLNQIASGLGGVGQAAGFPLKRHDKVDDLSKVGLSASPEPIYATIDDLGGPFPLKRHDKVDDLSKVGRSRNQELAQKIDNLNQAVSEAKAGFFGNLEQTIDKLKDSTKKNVMNLYVESAKKVPASLSAKLDNYAINSHTRINSNIQNGAINEKATGMLTQKNPEWLKLVNDKIVAHNVGSVSLSEYDKIGFNQKNMKDYSDSFKFSTKLNNAVKDIKSGFTHFLANAFSTGYYCLARENAEHGIKNVNTKGGFQKS.

Basic and acidic residues predominate over residues Glu-630–Ala-649. The tract at residues Glu-630–Gln-652 is disordered.

May be necessary for the transcription, folding, export, or function of the cytotoxin. This chain is Cytotoxicity-associated immunodominant antigen (cagA), found in Helicobacter pylori (strain ATCC 700392 / 26695) (Campylobacter pylori).